The following is a 169-amino-acid chain: Ureidoglycolate lyase (169 aa).

It belongs to the ureidoglycolate lyase family. As to quaternary structure, homodimer. It depends on Ni(2+) as a cofactor.

The catalysed reaction is (S)-ureidoglycolate = urea + glyoxylate. It participates in nitrogen metabolism; (S)-allantoin degradation. Functionally, catalyzes the catabolism of the allantoin degradation intermediate (S)-ureidoglycolate, generating urea and glyoxylate. Involved in the utilization of allantoin as nitrogen source. This chain is Ureidoglycolate lyase, found in Brucella ovis (strain ATCC 25840 / 63/290 / NCTC 10512).